We begin with the raw amino-acid sequence, 179 residues long: Large ribosomal subunit protein uL5 (179 aa).

It belongs to the universal ribosomal protein uL5 family. As to quaternary structure, part of the 50S ribosomal subunit; part of the 5S rRNA/L5/L18/L25 subcomplex. Contacts the 5S rRNA and the P site tRNA. Forms a bridge to the 30S subunit in the 70S ribosome.

Functionally, this is one of the proteins that bind and probably mediate the attachment of the 5S RNA into the large ribosomal subunit, where it forms part of the central protuberance. In the 70S ribosome it contacts protein S13 of the 30S subunit (bridge B1b), connecting the 2 subunits; this bridge is implicated in subunit movement. Contacts the P site tRNA; the 5S rRNA and some of its associated proteins might help stabilize positioning of ribosome-bound tRNAs. The chain is Large ribosomal subunit protein uL5 from Rickettsia felis (strain ATCC VR-1525 / URRWXCal2) (Rickettsia azadi).